A 263-amino-acid chain; its full sequence is Small ribosomal subunit protein eS4 (263 aa).

In terms of domain architecture, S4 RNA-binding spans 42–104 (LPLIIFLRNR…TGENFRLIYD (63 aa)).

Belongs to the eukaryotic ribosomal protein eS4 family.

The chain is Small ribosomal subunit protein eS4 (RPS4) from Cricetulus griseus (Chinese hamster).